The chain runs to 766 residues: FYVE, RhoGEF and PH domain-containing protein 4 (766 aa).

Disordered stretches follow at residues 1-20 (MEEI…PSKV), 46-83 (NLNA…DKTQ), and 134-188 (ETAT…ESPL). The tract at residues 1–150 (MEEIKPASAS…SPTTDSCDGN (150 aa)) is actin filament-binding. Composition is skewed to polar residues over residues 58–83 (LTTT…DKTQ) and 145–157 (DSCD…SSYR). Over residues 167 to 184 (LEERGAETETKVQERENG) the composition is skewed to basic and acidic residues. The DH domain occupies 206–393 (KLHKIANELL…STAASHSNSA (188 aa)). The 100-residue stretch at 422 to 521 (ELIKEGQILK…WIKALQETID (100 aa)) folds into the PH 1 domain. The segment at 559–619 (DNEVTMCMKC…VCKDCYQIIS (61 aa)) adopts an FYVE-type zinc-finger fold. Zn(2+) is bound by residues Cys565, Cys568, Cys582, Cys585, Cys590, Cys593, Cys611, and Cys614. The 98-residue stretch at 643-740 (NSVVCSFLQY…WLKVILLAVT (98 aa)) folds into the PH 2 domain. Residues Ser702 and Ser716 each carry the phosphoserine modification. Residues 742–766 (ETPGGPNEHPATLDDHPEPKKKSEC) are disordered. Basic and acidic residues predominate over residues 752–766 (ATLDDHPEPKKKSEC).

As to quaternary structure, homooligomer. Expressed in different tissues, including brain, cerebellum, peripheral nerve, skeletal muscle, heart, uterus, placenta and testis.

It localises to the cytoplasm. Its subcellular location is the cytoskeleton. The protein resides in the cell projection. The protein localises to the filopodium. Functionally, activates CDC42, a member of the Ras-like family of Rho- and Rac proteins, by exchanging bound GDP for free GTP. Plays a role in regulating the actin cytoskeleton and cell shape. Activates MAPK8. The polypeptide is FYVE, RhoGEF and PH domain-containing protein 4 (FGD4) (Homo sapiens (Human)).